Here is a 485-residue protein sequence, read N- to C-terminus: MKEFRVRFAPSPTGPIHIGNMRTALFNYLFSRSEGATFVLRIEDTDLERSSKGFEELIFKELKWLGIEWDEGPDKPGPYGPYRQSERLEIYHRFAQKLIEEKKAYRCYCTPEELEEDRKKAIERGEIPRYSGRCRYLTKEQEETFIREGRKPVIRFMVPDDEVIEFEDMIKGKITIKSDTLGGDMVIIKSDGMPTYNFAVVIDDALMKITHVIRGEDHIYNTPKQILIYKALGFEIPKFAHVPLILGPDRTKLSKRHGHTYIGQYRELGYLPEAMFNFLSLLSWYPEDNVELMSKEEIIRKFNFKRIHKSNPVFDIEKLNWMNQQYIQKSPVERIVDLAIPHLKKAGYIDEIDELRYNWLKDVISLYKDGLSYVAQIVDMAKTFFVEEVDYTGEMIEFLKSPNSIKVLEAFKGYLKDKSEITEDDVREWMKKAQKELGVKGKEFFMPIRIAVTGEEHGPELVKVLALLGKNRVVKRLDRVLNLIE.

The 'HIGH' region motif lies at 10-20 (PSPTGPIHIGN). Residues 252-256 (KLSKR) carry the 'KMSKS' region motif. ATP is bound at residue Lys-255.

The protein belongs to the class-I aminoacyl-tRNA synthetase family. Glutamate--tRNA ligase type 1 subfamily. As to quaternary structure, monomer.

The protein localises to the cytoplasm. The enzyme catalyses tRNA(Glu) + L-glutamate + ATP = L-glutamyl-tRNA(Glu) + AMP + diphosphate. In terms of biological role, catalyzes the attachment of glutamate to tRNA(Glu) in a two-step reaction: glutamate is first activated by ATP to form Glu-AMP and then transferred to the acceptor end of tRNA(Glu). This Caldanaerobacter subterraneus subsp. tengcongensis (strain DSM 15242 / JCM 11007 / NBRC 100824 / MB4) (Thermoanaerobacter tengcongensis) protein is Glutamate--tRNA ligase 2.